Reading from the N-terminus, the 506-residue chain is Glutamate--tRNA ligase (506 aa).

Residues 12-22 carry the 'HIGH' region motif; it reads PSPTGDPHVGT. Positions 253-257 match the 'KMSKS' region motif; it reads KLSKR. ATP is bound at residue lysine 256.

This sequence belongs to the class-I aminoacyl-tRNA synthetase family. Glutamate--tRNA ligase type 1 subfamily. As to quaternary structure, monomer.

It is found in the cytoplasm. It carries out the reaction tRNA(Glu) + L-glutamate + ATP = L-glutamyl-tRNA(Glu) + AMP + diphosphate. Catalyzes the attachment of glutamate to tRNA(Glu) in a two-step reaction: glutamate is first activated by ATP to form Glu-AMP and then transferred to the acceptor end of tRNA(Glu). The chain is Glutamate--tRNA ligase from Chlamydia trachomatis serovar L2 (strain ATCC VR-902B / DSM 19102 / 434/Bu).